We begin with the raw amino-acid sequence, 682 residues long: Pesticidal crystal protein Cry19Ba (682 aa).

Belongs to the delta endotoxin family.

Promotes colloidosmotic lysis by binding to the midgut epithelial cells of mosquitos. Has larvicidal activity against Culex pipiens molestus, but not to Anopheles stephensi. The protein is Pesticidal crystal protein Cry19Ba of Bacillus thuringiensis subsp. higo.